Reading from the N-terminus, the 226-residue chain is NAD(P)H-quinone oxidoreductase subunit K, chloroplastic (226 aa).

Residues cysteine 43, cysteine 44, cysteine 108, and cysteine 139 each contribute to the [4Fe-4S] cluster site.

This sequence belongs to the complex I 20 kDa subunit family. As to quaternary structure, NDH is composed of at least 16 different subunits, 5 of which are encoded in the nucleus. It depends on [4Fe-4S] cluster as a cofactor.

Its subcellular location is the plastid. The protein localises to the chloroplast thylakoid membrane. The catalysed reaction is a plastoquinone + NADH + (n+1) H(+)(in) = a plastoquinol + NAD(+) + n H(+)(out). It carries out the reaction a plastoquinone + NADPH + (n+1) H(+)(in) = a plastoquinol + NADP(+) + n H(+)(out). NDH shuttles electrons from NAD(P)H:plastoquinone, via FMN and iron-sulfur (Fe-S) centers, to quinones in the photosynthetic chain and possibly in a chloroplast respiratory chain. The immediate electron acceptor for the enzyme in this species is believed to be plastoquinone. Couples the redox reaction to proton translocation, and thus conserves the redox energy in a proton gradient. The polypeptide is NAD(P)H-quinone oxidoreductase subunit K, chloroplastic (Lupinus luteus (European yellow lupine)).